Reading from the N-terminus, the 427-residue chain is Mitochondrial fission protein ELM1 (427 aa).

As to quaternary structure, interacts with DRP3 and DRP3B.

It localises to the mitochondrion outer membrane. Functionally, plant-specific factor involved in mitochondria fission. Is required for the correct localization of DRP3A from the cytosol to mitochondrial fission sites. Does not seem to be required for peroxisomal division. In Arabidopsis thaliana (Mouse-ear cress), this protein is Mitochondrial fission protein ELM1 (ELM1).